The primary structure comprises 217 residues: GTP cyclohydrolase 1 (217 aa).

The Zn(2+) site is built by Cys109, His112, and Cys180.

The protein belongs to the GTP cyclohydrolase I family. Toroid-shaped homodecamer, composed of two pentamers of five dimers.

It carries out the reaction GTP + H2O = 7,8-dihydroneopterin 3'-triphosphate + formate + H(+). Its pathway is cofactor biosynthesis; 7,8-dihydroneopterin triphosphate biosynthesis; 7,8-dihydroneopterin triphosphate from GTP: step 1/1. The sequence is that of GTP cyclohydrolase 1 from Vibrio parahaemolyticus serotype O3:K6 (strain RIMD 2210633).